A 306-amino-acid polypeptide reads, in one-letter code: Serine/threonine-protein kinase KIN28 (306 aa).

Residues 7 to 290 (YTKEKKVGEG…AVQCLESDYF (284 aa)) enclose the Protein kinase domain. Residues 13-21 (VGEGTYAVV) and K36 each bind ATP. The active-site Proton acceptor is D129. T162 carries the post-translational modification Phosphothreonine; by CAK.

Belongs to the protein kinase superfamily. CMGC Ser/Thr protein kinase family. CDC2/CDKX subfamily. In terms of assembly, CCL1 and KIN28 form the TFIIK complex, a component of the TFIIH holo complex. Component of a complex consisting of KIN28, CCL1 and TFB3. Interacts with TFB3. Also interacts with HNT1 and HOG1. Post-translationally, phosphorylation of Thr-162 regulates the affinity of interaction between CCL1, KIN28 and TFB3. Thr-162 phosphorylation does not vary through the cell cycle and is necessary for full kinase activity.

The protein resides in the nucleus. The catalysed reaction is [DNA-directed RNA polymerase] + ATP = phospho-[DNA-directed RNA polymerase] + ADP + H(+). Its function is as follows. Catalytic component of the TFIIK complex (KIN28-CCL1 dimer) which is the protein kinase component of transcription factor IIH (TFIIH) and phosphorylates the C-terminal domain of RNA polymerase II during transition from transcription to elongation after preinitiation complex (PIC) formation, thereby positively regulating transcription. TFIIH (or factor B) is essential for both basal and activated transcription, and is involved in nucleotide excision repair (NER) of damaged DNA. TFIIH has DNA-dependent ATPase activity and is essential for polymerase II transcription in vitro. Essential for cell proliferation. The protein is Serine/threonine-protein kinase KIN28 (KIN28) of Saccharomyces cerevisiae (strain ATCC 204508 / S288c) (Baker's yeast).